Consider the following 157-residue polypeptide: Putative dehydration-responsive element-binding protein 2H (157 aa).

The Nuclear localization signal signature appears at 5–21; it reads RKSRGTRDVAEILRKWR. A disordered region spans residues 29-57; the sequence is ADSCIDGGGSKPIRKAPPKRSRKGCMKGK. The segment covering 40 to 54 has biased composition (basic residues); it reads PIRKAPPKRSRKGCM. A DNA-binding region (AP2/ERF) is located at residues 66–123; it reads DYTGVRQRTWGKWVAEIREPGRGAKLWLGTFSSSYEAALAYDEASKAIYGQSARLNLP.

Belongs to the AP2/ERF transcription factor family. ERF subfamily.

The protein localises to the nucleus. Its function is as follows. Putative transcriptional activator that binds specifically to the DNA sequence 5'-[AG]CCGAC-3'. This is Putative dehydration-responsive element-binding protein 2H (DREB2H) from Arabidopsis thaliana (Mouse-ear cress).